The following is a 134-amino-acid chain: S-protein homolog 18 (134 aa).

The first 25 residues, 1–25 (MCPSSFRLILSVILIAFLFVGLCEA), serve as a signal peptide directing secretion. Asparagine 87 carries an N-linked (GlcNAc...) asparagine glycan.

The protein belongs to the plant self-incompatibility (S1) protein family.

It is found in the secreted. The sequence is that of S-protein homolog 18 from Arabidopsis thaliana (Mouse-ear cress).